The sequence spans 201 residues: CASP-like protein 1F2 (201 aa).

The Cytoplasmic portion of the chain corresponds to 1–29 (MITSIATTTAGAFEVKSLGFIPYPSQPKR). Residues 30–50 (IFFMAQVIFRILAIAFAVASI) traverse the membrane as a helical segment. Topologically, residues 51–78 (SAMVTSDQNVIVFGMDTAARYSYSSAFR) are extracellular. A helical transmembrane segment spans residues 79-99 (FLVGANAVVCGFSVLSLIFVC). Residues 100–119 (LMSRRSEAILEKNYYLFLHD) lie on the Cytoplasmic side of the membrane. The chain crosses the membrane as a helical span at residues 120–140 (MVMMVMMVSGCSAATAIGYVG). At 141–162 (RYGEKEITWTAVCDFVGKFCNQ) the chain is on the extracellular side. A helical transmembrane segment spans residues 163 to 183 (ALVSIVLAYLALFCYVALTTL). Topologically, residues 184 to 201 (AAHKLNHSSSTAAIRQNE) are cytoplasmic.

The protein belongs to the Casparian strip membrane proteins (CASP) family. In terms of assembly, homodimer and heterodimers.

The protein resides in the cell membrane. This Ricinus communis (Castor bean) protein is CASP-like protein 1F2.